Here is a 699-residue protein sequence, read N- to C-terminus: Endogenous retrovirus group K member 8 Env polyprotein (699 aa).

Positions 1 to 47 are disordered; that stretch reads MNPSEMQRKAPPRRRRHRNRAPLTHKMNKMVTSEEQMKLPSTKKAEP. A signal peptide spans 1–89; it reads MNPSEMQRKA…ALMIVSMVVS (89 aa). Over residues 10-20 the composition is skewed to basic residues; it reads APPRRRRHRNR. Residues 90–632 lie on the Extracellular side of the membrane; that stretch reads LPMPAGAAVA…NLNPVTWVKT (543 aa). N-linked (GlcNAc...) asparagine glycans are attached at residues N100, N128, N153, N274, N355, N372, and N461. A fusion peptide region spans residues 466-486; that stretch reads FIFTLIAVIMGLIAVTATAAV. N-linked (GlcNAc...) asparagine glycosylation is found at N507, N554, N566, and N585. A helical membrane pass occupies residues 633 to 653; the sequence is IGSTTIINLILILVCLFCLLL. At 654–699 the chain is on the cytoplasmic side; the sequence is VCRCTQQLRRDSDHRERAMMTMAVLSKRKGGNVGKSKRDQIVTVSV.

The protein belongs to the beta type-B retroviral envelope protein family. HERV class-II K(HML-2) env subfamily. In terms of assembly, the surface (SU) and transmembrane (TM) proteins form a heterodimer. SU and TM are attached by noncovalent interactions or by a labile interchain disulfide bond. Post-translationally, specific enzymatic cleavages in vivo yield the mature SU and TM proteins.

The protein resides in the cell membrane. The protein localises to the virion. Functionally, retroviral envelope proteins mediate receptor recognition and membrane fusion during early infection. Endogenous envelope proteins may have kept, lost or modified their original function during evolution. This endogenous envelope protein has lost its original fusogenic properties. In terms of biological role, SU mediates receptor recognition. TM anchors the envelope heterodimer to the viral membrane through one transmembrane domain. The other hydrophobic domain, called fusion peptide, mediates fusion of the viral membrane with the target cell membrane. This Homo sapiens (Human) protein is Endogenous retrovirus group K member 8 Env polyprotein (ERVK-8).